The following is a 117-amino-acid chain: LYR motif-containing protein 1 (117 aa).

Belongs to the complex I LYR family.

The chain is LYR motif-containing protein 1 (lyrm1) from Dictyostelium discoideum (Social amoeba).